The chain runs to 191 residues: Large ribosomal subunit protein uL6 (191 aa).

The protein belongs to the universal ribosomal protein uL6 family. In terms of assembly, part of the 50S ribosomal subunit.

Its function is as follows. This protein binds to the 23S rRNA, and is important in its secondary structure. It is located near the subunit interface in the base of the L7/L12 stalk, and near the tRNA binding site of the peptidyltransferase center. The chain is Large ribosomal subunit protein uL6 from Gloeobacter violaceus (strain ATCC 29082 / PCC 7421).